A 142-amino-acid chain; its full sequence is Large ribosomal subunit protein uL13 (142 aa).

The protein belongs to the universal ribosomal protein uL13 family. As to quaternary structure, part of the 50S ribosomal subunit.

Functionally, this protein is one of the early assembly proteins of the 50S ribosomal subunit, although it is not seen to bind rRNA by itself. It is important during the early stages of 50S assembly. This chain is Large ribosomal subunit protein uL13, found in Azotobacter vinelandii (strain DJ / ATCC BAA-1303).